Here is a 174-residue protein sequence, read N- to C-terminus: NADH-quinone oxidoreductase subunit I (174 aa).

4Fe-4S ferredoxin-type domains are found at residues 44-74 (LNRY…VEGD) and 90-119 (RVYQ…MTND). Residues cysteine 54, cysteine 57, cysteine 60, cysteine 64, cysteine 99, cysteine 102, cysteine 105, and cysteine 109 each contribute to the [4Fe-4S] cluster site.

This sequence belongs to the complex I 23 kDa subunit family. NDH-1 is composed of 14 different subunits. Subunits NuoA, H, J, K, L, M, N constitute the membrane sector of the complex. [4Fe-4S] cluster serves as cofactor.

It is found in the cell membrane. It carries out the reaction a quinone + NADH + 5 H(+)(in) = a quinol + NAD(+) + 4 H(+)(out). Its function is as follows. NDH-1 shuttles electrons from NADH, via FMN and iron-sulfur (Fe-S) centers, to quinones in the respiratory chain. The immediate electron acceptor for the enzyme in this species is believed to be menaquinone. Couples the redox reaction to proton translocation (for every two electrons transferred, four hydrogen ions are translocated across the cytoplasmic membrane), and thus conserves the redox energy in a proton gradient. In Mycobacterium sp. (strain KMS), this protein is NADH-quinone oxidoreductase subunit I.